The following is a 192-amino-acid chain: 7-methyl-GTP pyrophosphatase (192 aa).

Aspartate 69 (proton acceptor) is an active-site residue.

This sequence belongs to the Maf family. YceF subfamily. A divalent metal cation serves as cofactor.

Its subcellular location is the cytoplasm. It carries out the reaction N(7)-methyl-GTP + H2O = N(7)-methyl-GMP + diphosphate + H(+). Functionally, nucleoside triphosphate pyrophosphatase that hydrolyzes 7-methyl-GTP (m(7)GTP). May have a dual role in cell division arrest and in preventing the incorporation of modified nucleotides into cellular nucleic acids. The protein is 7-methyl-GTP pyrophosphatase (maf-2) of Pseudomonas putida (strain ATCC 47054 / DSM 6125 / CFBP 8728 / NCIMB 11950 / KT2440).